The chain runs to 178 residues: Large ribosomal subunit protein uL6 (178 aa).

It belongs to the universal ribosomal protein uL6 family. As to quaternary structure, part of the 50S ribosomal subunit.

Functionally, this protein binds to the 23S rRNA, and is important in its secondary structure. It is located near the subunit interface in the base of the L7/L12 stalk, and near the tRNA binding site of the peptidyltransferase center. This Listeria monocytogenes serotype 4a (strain HCC23) protein is Large ribosomal subunit protein uL6.